The primary structure comprises 1353 residues: Stress response protein NST1 (1353 aa).

The span at 1–12 (MSSKSQQPPTGL) shows a compositional bias: polar residues. Disordered regions lie at residues 1 to 66 (MSSK…FFNF), 216 to 422 (NANA…TQSS), 503 to 522 (NGLR…VEVD), 531 to 618 (DHRA…SFGS), 652 to 694 (RRSV…AEEG), 727 to 882 (LREL…AKET), 979 to 1119 (GLKS…DDAF), 1140 to 1276 (GSLI…GAGV), and 1308 to 1337 (GGTA…HQQQ). The span at 16–25 (AAKKRAKKAA) shows a compositional bias: basic residues. Residues 26 to 45 (KQSQNPQPQSAPQTSSQTPA) are compositionally biased toward low complexity. Over residues 46–59 (SVPPLPPASVPDPL) the composition is skewed to pro residues. Residues 218-229 (NARSFPSPQQTI) are compositionally biased toward polar residues. Acidic residues predominate over residues 242–254 (REEEYDDEEEIEE). Basic residues predominate over residues 268-277 (KKNKKKKKKG). The span at 287–300 (VEPPAPLPPLPPPS) shows a compositional bias: pro residues. A compositionally biased stretch (low complexity) spans 317 to 330 (LPTHQPQPLSQQPP). Pro residues predominate over residues 331–349 (SLNPLPPPAPASAPTPTPP). Residues 368 to 388 (PARSARAAGKAPASAAPPHNA) show a composition bias toward low complexity. Positions 531 to 541 (DHRAPELHDHD) are enriched in basic and acidic residues. The span at 542 to 583 (PDDLDGEESEEYDDDDDYADDDELDDDDIGTDEADVGDEIDE) shows a compositional bias: acidic residues. Positions 654 to 665 (SVREEQNLRDMQ) are enriched in basic and acidic residues. The span at 666 to 681 (EETDEEEEEEDDDESR) shows a compositional bias: acidic residues. 3 stretches are compositionally biased toward basic and acidic residues: residues 682–694 (DEPM…AEEG), 727–750 (LREL…EAQK), and 760–882 (QKAE…AKET). The stretch at 713 to 944 (AYRERVAKQR…AAQQAQRERA (232 aa)) forms a coiled coil. Polar residues predominate over residues 1009–1021 (TNATPGRSMQKTP). Pro residues predominate over residues 1154 to 1165 (PTPPAPIAPPNL). Composition is skewed to polar residues over residues 1174-1187 (SDGQ…LRST) and 1209-1220 (QPQQRRPTTSWD).

The protein belongs to the NST1 family.

Its subcellular location is the cytoplasm. In terms of biological role, may act as a negative regulator of salt tolerance. This chain is Stress response protein NST1 (NST1), found in Cryptococcus neoformans var. neoformans serotype D (strain B-3501A) (Filobasidiella neoformans).